Reading from the N-terminus, the 983-residue chain is MASPHKPWRAEYAKSSRSSCKTCKSVINKENFRLGKLVQSTHFDGIMPMWNHASCILKKTKQIKSVDDVEGIESLRWEDQQKIRKYVESGAGSNTSTSTGTSTSSTANNAKLEYGIEVSQTSRAGCRKCSEKILKGEVRIFSKPEGPGNKGLMWHHAKCFLEMSSSTELESLSGWRSIPDSDQEALLPLVKKALPAAKTETAEARQTNSRAGTKRKNDSVDNEKSKLAKSSFDMSTSGALQPCSKEKEMEAQTKELWDLKDDLKKYVTSAELREMLEVNEQSTRGSELDLRDKCADGMMFGPLALCPMCSGHLSFSGGLYRCHGYISEWSKCSHSTLDPDRIKGKWKIPDETENQFLLKWNKSQKSVKPKRILRPVLSGETSQGQGSKDATDSSRSERLADLKVSIAGNTKERQPWKKRIEEAGAEFHANVKKGTSCLVVCGLTDIRDAEMRKARRMKVAIVREDYLVDCFKKQRKLPFDKYKIEDTSESLVTVKVKGRSAVHEASGLQEHCHILEDGNSIYNTTLSMSDLSTGINSYYILQIIQEDKGSDCYVFRKWGRVGNEKIGGNKVEEMSKSDAVHEFKRLFLEKTGNTWESWEQKTNFQKQPGKFLPLDIDYGVNKQVAKKEPFQTSSNLAPSLIELMKMLFDVETYRSAMMEFEINMSEMPLGKLSKHNIQKGFEALTEIQRLLTESDPQPTMKESLLVDASNRFFTMIPSIHPHIIRDEDDFKSKVKMLEALQDIEIASRIVGFDVDSTESLDDKYKKLHCDISPLPHDSEDYRLIEKYLNTTHAPTHTEWSLELEEVFALEREGEFDKYAPHREKLGNKMLLWHGSRLTNFVGILNQGLRIAPPEAPATGYMFGKGIYFADLVSKSAQYCYTCKKNPVGLMLLSEVALGEIHELTKAKYMDKPPRGKHSTKGLGKKVPQDSEFAKWRGDVTVPCGKPVSSKVKASELMYNEYIVYDTAQVKLQFLLKVRFKHKR.

2 consecutive PARP-type zinc fingers follow at residues 8–91 and 114–194; these read WRAE…ESGA and YGIE…KKAL. 8 residues coordinate Zn(2+): Cys20, Cys23, His52, Cys55, Cys126, Cys129, His156, and Cys159. The segment at 197–246 is disordered; sequence AKTETAEARQTNSRAGTKRKNDSVDNEKSKLAKSSFDMSTSGALQPCSKE. Residues 215–226 are compositionally biased toward basic and acidic residues; sequence RKNDSVDNEKSK. Positions 236-375 constitute a PADR1 zinc-binding domain; sequence TSGALQPCSK…SVKPKRILRP (140 aa). The zinc ribbon stretch occupies residues 301–345; that stretch reads GPLALCPMCSGHLSFSGGLYRCHGYISEWSKCSHSTLDPDRIKGK. Zn(2+) is bound by residues Cys306, Cys309, Cys322, and Cys332. The tract at residues 369-397 is disordered; that stretch reads PKRILRPVLSGETSQGQGSKDATDSSRSE. Residues 379-388 show a composition bias toward polar residues; it reads GETSQGQGSK. The region spanning 394–484 is the BRCT domain; sequence SRSERLADLK…RKLPFDKYKI (91 aa). A WGR domain is found at 511 to 611; sequence HCHILEDGNS…TNFQKQPGKF (101 aa). Residues 633–751 enclose the PARP alpha-helical domain; it reads SSNLAPSLIE…DIEIASRIVG (119 aa). The PARP catalytic domain occupies 758-983; the sequence is ESLDDKYKKL…LLKVRFKHKR (226 aa).

Belongs to the ARTD/PARP family.

Its subcellular location is the nucleus. The catalysed reaction is NAD(+) + (ADP-D-ribosyl)n-acceptor = nicotinamide + (ADP-D-ribosyl)n+1-acceptor + H(+).. It carries out the reaction L-aspartyl-[protein] + NAD(+) = 4-O-(ADP-D-ribosyl)-L-aspartyl-[protein] + nicotinamide. The enzyme catalyses L-glutamyl-[protein] + NAD(+) = 5-O-(ADP-D-ribosyl)-L-glutamyl-[protein] + nicotinamide. Its function is as follows. Involved in the base excision repair (BER) pathway, by catalyzing the poly(ADP-ribosyl)ation of a limited number of acceptor proteins involved in chromatin architecture and in DNA metabolism. This modification follows DNA damages and appears as an obligatory step in a detection/signaling pathway leading to the reparation of DNA strand breaks. This chain is Poly [ADP-ribose] polymerase 1 (PARP1), found in Arabidopsis thaliana (Mouse-ear cress).